An 882-amino-acid polypeptide reads, in one-letter code: Putative HTH-type transcriptional regulator Mb0914c (882 aa).

In terms of domain architecture, HTH luxR-type spans 814 to 879 (PARGWGSLTP…QLVDEAARRG (66 aa)). The H-T-H motif DNA-binding region spans 838 to 857 (NKDIAKRLFVSPRTVQTHLT).

The protein is Putative HTH-type transcriptional regulator Mb0914c of Mycobacterium bovis (strain ATCC BAA-935 / AF2122/97).